A 666-amino-acid chain; its full sequence is Protein SLY1 (666 aa).

4 consecutive repeat copies span residues 106–142 (KENI…DLAQ), 220–257 (KGGP…DSLE), 436–474 (LDIL…QNVE), and 478–514 (KEND…DGSD). Residues 106-514 (KENIDIIVND…QNKSLEDGSD (409 aa)) are 4 X approximate repeats.

Belongs to the STXBP/unc-18/SEC1 family. In terms of assembly, interacts with SED5.

Its subcellular location is the cytoplasm. It localises to the membrane. Its function is as follows. Able to suppress the functional loss of YPT1. SLY1 is essential for cell viability. May interact indirectly, or directly with YPT1. This chain is Protein SLY1 (SLY1), found in Saccharomyces cerevisiae (strain ATCC 204508 / S288c) (Baker's yeast).